Reading from the N-terminus, the 146-residue chain is Large ribosomal subunit protein uL15 (146 aa).

The segment covering M1–R13 has biased composition (basic and acidic residues). The interval M1 to E51 is disordered. 2 stretches are compositionally biased toward gly residues: residues R21 to A31 and S42 to E51.

The protein belongs to the universal ribosomal protein uL15 family. As to quaternary structure, part of the 50S ribosomal subunit.

In terms of biological role, binds to the 23S rRNA. This is Large ribosomal subunit protein uL15 from Bacillus mycoides (strain KBAB4) (Bacillus weihenstephanensis).